Here is a 268-residue protein sequence, read N- to C-terminus: Ribosomal RNA small subunit methyltransferase A (268 aa).

6 residues coordinate S-adenosyl-L-methionine: Asn23, Ile25, Gly50, Glu72, Asp97, and Asn116.

This sequence belongs to the class I-like SAM-binding methyltransferase superfamily. rRNA adenine N(6)-methyltransferase family. RsmA subfamily.

Its subcellular location is the cytoplasm. It carries out the reaction adenosine(1518)/adenosine(1519) in 16S rRNA + 4 S-adenosyl-L-methionine = N(6)-dimethyladenosine(1518)/N(6)-dimethyladenosine(1519) in 16S rRNA + 4 S-adenosyl-L-homocysteine + 4 H(+). Its function is as follows. Specifically dimethylates two adjacent adenosines (A1518 and A1519) in the loop of a conserved hairpin near the 3'-end of 16S rRNA in the 30S particle. May play a critical role in biogenesis of 30S subunits. In Rickettsia bellii (strain RML369-C), this protein is Ribosomal RNA small subunit methyltransferase A.